The following is an 892-amino-acid chain: Alanine--tRNA ligase (892 aa).

Residues His578, His582, Cys681, and His685 each contribute to the Zn(2+) site.

The protein belongs to the class-II aminoacyl-tRNA synthetase family. The cofactor is Zn(2+).

Its subcellular location is the cytoplasm. The enzyme catalyses tRNA(Ala) + L-alanine + ATP = L-alanyl-tRNA(Ala) + AMP + diphosphate. Catalyzes the attachment of alanine to tRNA(Ala) in a two-step reaction: alanine is first activated by ATP to form Ala-AMP and then transferred to the acceptor end of tRNA(Ala). Also edits incorrectly charged Ser-tRNA(Ala) and Gly-tRNA(Ala) via its editing domain. This chain is Alanine--tRNA ligase, found in Cutibacterium acnes (strain DSM 16379 / KPA171202) (Propionibacterium acnes).